The sequence spans 230 residues: Demethylmenaquinone methyltransferase (230 aa).

Residues threonine 62, aspartate 80, 100–101, and serine 117 contribute to the S-adenosyl-L-methionine site; that span reads DG.

This sequence belongs to the class I-like SAM-binding methyltransferase superfamily. MenG/UbiE family.

It catalyses the reaction a 2-demethylmenaquinol + S-adenosyl-L-methionine = a menaquinol + S-adenosyl-L-homocysteine + H(+). Its pathway is quinol/quinone metabolism; menaquinone biosynthesis; menaquinol from 1,4-dihydroxy-2-naphthoate: step 2/2. Its function is as follows. Methyltransferase required for the conversion of demethylmenaquinol (DMKH2) to menaquinol (MKH2). This chain is Demethylmenaquinone methyltransferase, found in Corynebacterium efficiens (strain DSM 44549 / YS-314 / AJ 12310 / JCM 11189 / NBRC 100395).